We begin with the raw amino-acid sequence, 189 residues long: Putative manganese efflux pump MntP (189 aa).

6 consecutive transmembrane segments (helical) span residues 3-23, 41-61, 65-85, 103-123, 132-152, and 167-187; these read LSATLILAFGMSMDAFAASIG, LIFGVVEAITPIIGWGIGLFA, IMEWDHWVAFSLLFILGMRMI, GFWLLVATAIATSLDAMAIGV, IVHTAMAIGCATMIMATLGMM, and ILGGVVLIGIGVNILLEHLGY.

It belongs to the MntP (TC 9.B.29) family.

Its subcellular location is the cell inner membrane. In terms of biological role, probably functions as a manganese efflux pump. This Serratia proteamaculans (strain 568) protein is Putative manganese efflux pump MntP.